Here is a 34-residue protein sequence, read N- to C-terminus: ASCRTPKDCADPCRKETGCPYGKCMNRKCKCNRC.

Cystine bridges form between C3–C24, C9–C29, C13–C31, and C19–C34. The residue at position 34 (C34) is a Cysteine amide.

It belongs to the short scorpion toxin superfamily. Potassium channel inhibitor family. Alpha-KTx 06 subfamily. In terms of processing, amidated. The amidated toxin shows 5-fold more affinity for Kv1.3/KCNA3 than the synthetic carboxylated form. As to expression, expressed by the venom gland.

It is found in the secreted. Its function is as follows. Potently blocks voltage-gated potassium channels Kv1.1/KCNA1 (IC(50)=7-11 nM) and Kv1.3/KCNA3 (IC(50)=11-29 pM). Also mildly blocks intermediate (IK) conductance calcium-activated potassium channels (KCa3.1/KCNN4) and ERG1/Kv11.1/KCNH2. Shows ability to suppress proliferation of lymphocytes, which are known to be sensitive to Kv1.3/KCNA3 homotetrameric channel block. The polypeptide is Potassium channel toxin alpha-KTx 6.3 (Heterometrus spinifer (Asia giant forest scorpion)).